The primary structure comprises 1136 residues: Coiled-coil domain-containing protein 136 (1136 aa).

A disordered region spans residues 1-46 (MQAMDGEVLLPALYEEEEEEEEEEEEVEEEQVEKGGSLGSLSMGKH). Residues 14–31 (YEEEEEEEEEEEEVEEEQ) are compositionally biased toward acidic residues. At Ser50 the chain carries Phosphoserine. Coiled-coil stretches lie at residues 293-631 (VMQL…QNQE) and 681-730 (LQAL…QTQS). Disordered stretches follow at residues 741–773 (GKNS…KSYV), 814–837 (GSVS…DPAE), 965–990 (NRPS…NGVR), and 1040–1111 (KKER…PDPP). The segment covering 743–752 (NSGSRAPSTE) has biased composition (polar residues). A coiled-coil region spans residues 839-972 (EDLEHFEETV…KENRPSISSE (134 aa)). Low complexity predominate over residues 976-989 (KNVNKNMNKNANGV). Positions 1017-1057 (YYKASQRRLDELMKEEKEIEEARKKEREKKAKKDLCKLATN) form a coiled coil. A compositionally biased stretch (basic and acidic residues) spans 1040–1052 (KKEREKKAKKDLC). Acidic residues predominate over residues 1067-1091 (EPTEDEEENFEEYREGEDESCEAAE). Residues 1112–1132 (IFSLPLVGLVVISALLWCWWA) form a helical membrane-spanning segment.

In terms of tissue distribution, present at high level in testis (at protein level).

Its subcellular location is the cytoplasmic vesicle. It is found in the secretory vesicle. The protein localises to the acrosome membrane. May play a role in acrosome formation in spermatogenesis and in fertilization. The protein is Coiled-coil domain-containing protein 136 (Ccdc136) of Mus musculus (Mouse).